Consider the following 252-residue polypeptide: 2-succinyl-6-hydroxy-2,4-cyclohexadiene-1-carboxylate synthase (252 aa).

Belongs to the AB hydrolase superfamily. MenH family. In terms of assembly, monomer.

It carries out the reaction 5-enolpyruvoyl-6-hydroxy-2-succinyl-cyclohex-3-ene-1-carboxylate = (1R,6R)-6-hydroxy-2-succinyl-cyclohexa-2,4-diene-1-carboxylate + pyruvate. The protein operates within quinol/quinone metabolism; 1,4-dihydroxy-2-naphthoate biosynthesis; 1,4-dihydroxy-2-naphthoate from chorismate: step 3/7. Its pathway is quinol/quinone metabolism; menaquinone biosynthesis. Its function is as follows. Catalyzes a proton abstraction reaction that results in 2,5-elimination of pyruvate from 2-succinyl-5-enolpyruvyl-6-hydroxy-3-cyclohexene-1-carboxylate (SEPHCHC) and the formation of 2-succinyl-6-hydroxy-2,4-cyclohexadiene-1-carboxylate (SHCHC). This Shigella boydii serotype 4 (strain Sb227) protein is 2-succinyl-6-hydroxy-2,4-cyclohexadiene-1-carboxylate synthase.